Here is a 224-residue protein sequence, read N- to C-terminus: Pyridoxal 5'-phosphate synthase subunit SNO1 (224 aa).

Residue Gly-67 to Ser-69 participates in L-glutamine binding. Cys-100 (nucleophile) is an active-site residue. Residues Arg-129 and Ile-160–Arg-161 contribute to the L-glutamine site. Residues His-203 and Glu-205 each act as charge relay system in the active site.

This sequence belongs to the glutaminase PdxT/SNO family.

It catalyses the reaction aldehydo-D-ribose 5-phosphate + D-glyceraldehyde 3-phosphate + L-glutamine = pyridoxal 5'-phosphate + L-glutamate + phosphate + 3 H2O + H(+). The catalysed reaction is L-glutamine + H2O = L-glutamate + NH4(+). It functions in the pathway cofactor biosynthesis; pyridoxal 5'-phosphate biosynthesis. In terms of biological role, catalyzes the hydrolysis of glutamine to glutamate and ammonia as part of the biosynthesis of pyridoxal 5'-phosphate. The resulting ammonia molecule is channeled to the active site of a SNZ isoform. The polypeptide is Pyridoxal 5'-phosphate synthase subunit SNO1 (SNO1) (Saccharomyces cerevisiae (strain ATCC 204508 / S288c) (Baker's yeast)).